We begin with the raw amino-acid sequence, 185 residues long: TATA-box-binding protein (185 aa).

2 tandem repeats follow at residues 3–78 (IQNI…REDL) and 94–176 (IQNI…AEKI).

Belongs to the TBP family.

In terms of biological role, general factor that plays a role in the activation of archaeal genes transcribed by RNA polymerase. Binds specifically to the TATA box promoter element which lies close to the position of transcription initiation. This chain is TATA-box-binding protein, found in Methanopyrus kandleri (strain AV19 / DSM 6324 / JCM 9639 / NBRC 100938).